The chain runs to 151 residues: Macrodomain Ter protein (151 aa).

This sequence belongs to the MatP family. In terms of assembly, homodimer.

Its subcellular location is the cytoplasm. Required for spatial organization of the terminus region of the chromosome (Ter macrodomain) during the cell cycle. Prevents early segregation of duplicated Ter macrodomains during cell division. Binds specifically to matS, which is a 13 bp signature motif repeated within the Ter macrodomain. The protein is Macrodomain Ter protein of Cronobacter sakazakii (strain ATCC BAA-894) (Enterobacter sakazakii).